The chain runs to 174 residues: Calcium-binding protein F (174 aa).

EF-hand domains lie at 9–44, 60–83, 92–127, and 133–162; these read KIFQ…KMDG, VDMD…EAKK, AALA…NGHT, and DQVL…RRID. Ca(2+)-binding residues include Asp22, Asn24, Asp26, Ser28, and Asp33. Ca(2+)-binding residues include Asp105, Asp107, Asp109, Lys111, Glu116, Asp140, Asp142, Asp144, Cys146, and Glu151.

This is Calcium-binding protein F (cbpF) from Dictyostelium discoideum (Social amoeba).